A 453-amino-acid polypeptide reads, in one-letter code: Glutamyl-tRNA(Gln) amidotransferase subunit A (453 aa).

Active-site charge relay system residues include Lys55 and Ser130. Residue Ser154 is the Acyl-ester intermediate of the active site.

It belongs to the amidase family. GatA subfamily. Heterotrimer of A, B and C subunits.

The enzyme catalyses L-glutamyl-tRNA(Gln) + L-glutamine + ATP + H2O = L-glutaminyl-tRNA(Gln) + L-glutamate + ADP + phosphate + H(+). Functionally, allows the formation of correctly charged Gln-tRNA(Gln) through the transamidation of misacylated Glu-tRNA(Gln) in organisms which lack glutaminyl-tRNA synthetase. The reaction takes place in the presence of glutamine and ATP through an activated gamma-phospho-Glu-tRNA(Gln). The protein is Glutamyl-tRNA(Gln) amidotransferase subunit A of Aliarcobacter butzleri (strain RM4018) (Arcobacter butzleri).